A 488-amino-acid polypeptide reads, in one-letter code: 1-deoxy-D-xylulose 5-phosphate reductoisomerase, apicoplastic (488 aa).

The transit peptide at 1-72 (MKKYIYIYFF…LCKKDLIDIG (72 aa)) directs the protein to the apicoplast. NADP(+) is bound by residues 86–89 (TGSI) and 115–117 (NKS). K205 is a binding site for 1-deoxy-D-xylulose 5-phosphate. E206 serves as a coordination point for NADP(+). A Mn(2+)-binding site is contributed by D231. Positions 232, 233, 270, and 293 each coordinate 1-deoxy-D-xylulose 5-phosphate. Residue E233 coordinates Mn(2+). Residue G299 coordinates NADP(+). 1-deoxy-D-xylulose 5-phosphate-binding residues include S306, N311, K312, and E315. Residue E315 coordinates Mn(2+).

It belongs to the DXR family. In terms of assembly, homodimer. It depends on Mg(2+) as a cofactor. Requires Mn(2+) as cofactor.

The protein localises to the plastid. Its subcellular location is the apicoplast. It catalyses the reaction 2-C-methyl-D-erythritol 4-phosphate + NADP(+) = 1-deoxy-D-xylulose 5-phosphate + NADPH + H(+). The protein operates within isoprenoid biosynthesis; isopentenyl diphosphate biosynthesis via DXP pathway; isopentenyl diphosphate from 1-deoxy-D-xylulose 5-phosphate: step 1/6. Inhibited by fosmidomycin and its derivatives. Its function is as follows. Catalyzes the NADPH-dependent rearrangement and reduction of 1-deoxy-D-xylulose-5-phosphate (DXP) to 2-C-methyl-D-erythritol 4-phosphate (MEP). This chain is 1-deoxy-D-xylulose 5-phosphate reductoisomerase, apicoplastic (DXR), found in Plasmodium falciparum (isolate 3D7).